The sequence spans 246 residues: Acetoacetate decarboxylase (246 aa).

K116 acts as the Schiff-base intermediate with acetoacetate in catalysis.

The protein belongs to the ADC family.

It catalyses the reaction acetoacetate + H(+) = acetone + CO2. Catalyzes the conversion of acetoacetate to acetone and carbon dioxide. The sequence is that of Acetoacetate decarboxylase from Burkholderia ambifaria (strain MC40-6).